A 249-amino-acid polypeptide reads, in one-letter code: Phosphatidylserine decarboxylase proenzyme (249 aa).

Serine 208 acts as the Schiff-base intermediate with substrate; via pyruvic acid in catalysis. Serine 208 is subject to Pyruvic acid (Ser); by autocatalysis.

This sequence belongs to the phosphatidylserine decarboxylase family. PSD-A subfamily. Heterodimer of a large membrane-associated beta subunit and a small pyruvoyl-containing alpha subunit. Pyruvate serves as cofactor. Post-translationally, is synthesized initially as an inactive proenzyme. Formation of the active enzyme involves a self-maturation process in which the active site pyruvoyl group is generated from an internal serine residue via an autocatalytic post-translational modification. Two non-identical subunits are generated from the proenzyme in this reaction, and the pyruvate is formed at the N-terminus of the alpha chain, which is derived from the carboxyl end of the proenzyme. The post-translation cleavage follows an unusual pathway, termed non-hydrolytic serinolysis, in which the side chain hydroxyl group of the serine supplies its oxygen atom to form the C-terminus of the beta chain, while the remainder of the serine residue undergoes an oxidative deamination to produce ammonia and the pyruvoyl prosthetic group on the alpha chain.

The protein resides in the cell membrane. It catalyses the reaction a 1,2-diacyl-sn-glycero-3-phospho-L-serine + H(+) = a 1,2-diacyl-sn-glycero-3-phosphoethanolamine + CO2. It participates in phospholipid metabolism; phosphatidylethanolamine biosynthesis; phosphatidylethanolamine from CDP-diacylglycerol: step 2/2. Functionally, catalyzes the formation of phosphatidylethanolamine (PtdEtn) from phosphatidylserine (PtdSer). The protein is Phosphatidylserine decarboxylase proenzyme of Erythrobacter litoralis (strain HTCC2594).